We begin with the raw amino-acid sequence, 555 residues long: Wee1-like protein kinase 2-A (555 aa).

Disordered regions lie at residues 1–81 (MRTA…SVGA) and 149–175 (FTPESYRQTHFQPNGKRKERPEDDCRT). Polar residues predominate over residues 38 to 48 (SPVSSWRTNNC). The segment covering 68–78 (SPSSDYSPDPS) has biased composition (low complexity). The span at 149–160 (FTPESYRQTHFQ) shows a compositional bias: polar residues. Residues 210–480 (FLEIEKIGAG…AASLAKNSVL (271 aa)) form the Protein kinase domain. Residues 216-224 (IGAGEFGSV) and K239 contribute to the ATP site. Residue D337 is the Proton acceptor of the active site. Mg(2+) is bound by residues N342 and D374. Positions 487-513 (AAQLQKQLNVEKFKTAMLERELKAAKL) form a coiled coil. S549 carries the phosphoserine modification.

This sequence belongs to the protein kinase superfamily. Ser/Thr protein kinase family. WEE1 subfamily. In terms of assembly, interacts with prmt5; this promotes protesomal degradation of wee2-a in the nucleus. The interaction with prmt5 is disrupted upon activation of the DNA replication checkpoint. Post-translationally, subject to proteasomal degradation in the nucleus. Detected in egg (at protein level). Oocyte-specific maternally supplied protein. Present in immature and mature oocytes and in early (pregastrula) embryos, but not in post-gastrula embryos.

It is found in the nucleus. Its subcellular location is the cytoplasm. It localises to the cytosol. It catalyses the reaction L-tyrosyl-[protein] + ATP = O-phospho-L-tyrosyl-[protein] + ADP + H(+). Oocyte-specific protein tyrosine kinase that phosphorylates and inhibits cdk1 and acts as a key regulator of meiosis. Required to maintain meiotic arrest in oocytes by phosphorylating cdk1 at 'Tyr-15', which inhibits cdk1 activity and prevents meiotic reentry. Negative regulator of mitosis. Involved in the mitotic DNA replication checkpoint. The polypeptide is Wee1-like protein kinase 2-A (wee2-a) (Xenopus laevis (African clawed frog)).